The following is a 761-amino-acid chain: MAASVKAAHELQSRTRTDDVLISGGVEFSSLLLSKPVLEGLSASGFQRPSPIQLKAIPLGRCGLDLIVQAKSGTGKTCVFTTIALDSLILENATTQVLVLAPTREIAVQIHAVVMAIGSAMEGLECHVFIGGRPISQDKQHLKKCHIAIGSPGRIKQLIEMGALMVSSIRLFVLDEADKLLEDDSSSSFQEQINWIYSSLPANKQMLALSATYPESLAQQLSRYMREPTFVRLNPTDPGLLGLKQYYKIVPSHSLPHKVFEEKVQSLLELFSKIPFNQALVFSNLHTRAQHLADILSSKGLPAVCISGGLSQDQRLEAMWKLKQYQCRVLISTDLTSRGIDAEKVNLVINLDVPQDWETYMHRIGRAGRFGTLGVAVTYCCHGEEENKMMAIAQKCSLDLMHLPDPIPPGIMEEACDHDVIIETLSKPKIPDNFKPEKKKKAKSEQMKSKPSRESHISVVITESVTGDKSCSRAETKTKNHSPKPGRQKQMAPAANLQHDSTITQKQQNNTLPKIPPLSSFKSHTGKRMTFDDALVDYETFIREGPGRSVEIIHQYDGFYRSQDKVNGLHDAHDEDEASESYVLEESQSHQDLPPAQEVSELSSEQKTSSESSSESEMEVESESSSSVPSKSTLEALPDNKVSLVRNHSELAKSTLPSTRVPQQATRSKQKPCQPQSQDTAHHHNLPHKHRTASKSSRRPTGPKRRTRETDETEEEEAGQDYWSSYRAWAEYYNSYYHHSPYNWMTAFYMNSVYIKEMMKH.

The Q motif motif lies at 26 to 54 (VEFSSLLLSKPVLEGLSASGFQRPSPIQL). Residues arginine 48, glutamine 53, 70–77 (AKSGTGKT), and 73–78 (GTGKTC) contribute to the ATP site. A Helicase ATP-binding domain is found at 57–231 (IPLGRCGLDL…SRYMREPTFV (175 aa)). Positions 175–178 (DEAD) match the DEAD box motif. The region spanning 266-415 (SLLELFSKIP…PIPPGIMEEA (150 aa)) is the Helicase C-terminal domain. Disordered stretches follow at residues 428–525 (PKIP…KSHT) and 570–720 (HDAH…EAGQ). Positions 443–456 (KSEQMKSKPSRESH) are enriched in basic and acidic residues. A compositionally biased stretch (polar residues) spans 498-512 (QHDSTITQKQQNNTL). Low complexity-rich tracts occupy residues 600–613 (SELS…SESS) and 623–635 (ESSS…STLE). Residues 655 to 679 (TLPSTRVPQQATRSKQKPCQPQSQD) are compositionally biased toward polar residues. A compositionally biased stretch (basic residues) spans 683–707 (HHNLPHKHRTASKSSRRPTGPKRRT).

It belongs to the DEAD box helicase family. DDX20 subfamily. As to quaternary structure, part of the core SMN complex.

It localises to the cytoplasm. Its subcellular location is the nucleus. The catalysed reaction is ATP + H2O = ADP + phosphate + H(+). The enzyme catalyses a ribonucleoside 5'-triphosphate + H2O = a ribonucleoside 5'-diphosphate + phosphate + H(+). In terms of biological role, the SMN complex catalyzes the assembly of small nuclear ribonucleoproteins (snRNPs), the building blocks of the spliceosome, and thereby plays an important role in the splicing of cellular pre-mRNAs. Most spliceosomal snRNPs contain a common set of Sm proteins SNRPB, SNRPD1, SNRPD2, SNRPD3, SNRPE, SNRPF and SNRPG that assemble in a heptameric protein ring on the Sm site of the small nuclear RNA to form the core snRNP (Sm core). In the cytosol, the Sm proteins SNRPD1, SNRPD2, SNRPE, SNRPF and SNRPG are trapped in an inactive 6S pICln-Sm complex by the chaperone CLNS1A that controls the assembly of the core snRNP. To assemble core snRNPs, the SMN complex accepts the trapped 5Sm proteins from CLNS1A forming an intermediate. Binding of snRNA inside 5Sm triggers eviction of the SMN complex, thereby allowing binding of SNRPD3 and SNRPB to complete assembly of the core snRNP. May also play a role in the metabolism of small nucleolar ribonucleoprotein (snoRNPs). This chain is Probable ATP-dependent RNA helicase DDX20 (ddx20), found in Danio rerio (Zebrafish).